The sequence spans 105 residues: Small ribosomal subunit protein uS10 (105 aa).

Belongs to the universal ribosomal protein uS10 family. In terms of assembly, part of the 30S ribosomal subunit.

Its function is as follows. Involved in the binding of tRNA to the ribosomes. The sequence is that of Small ribosomal subunit protein uS10 from Arthrospira platensis (Spirulina platensis).